Here is a 100-residue protein sequence, read N- to C-terminus: Large ribosomal subunit protein bL21 (100 aa).

It belongs to the bacterial ribosomal protein bL21 family. In terms of assembly, part of the 50S ribosomal subunit. Contacts protein L20.

This protein binds to 23S rRNA in the presence of protein L20. This chain is Large ribosomal subunit protein bL21, found in Deinococcus deserti (strain DSM 17065 / CIP 109153 / LMG 22923 / VCD115).